Here is an 865-residue protein sequence, read N- to C-terminus: Ribosome biogenesis protein BOP1 homolog (865 aa).

2 disordered regions span residues 1–195 (MVAN…LKLG) and 207–240 (KTRGLGVFPPVPKRKGKAAQDEYAAGDTSDEEDI). Acidic residues-rich tracts occupy residues 30–44 (LDESNDEDNSNESDY), 57–79 (NEGEDSSDSDGEYATDDDEDDVL), and 87–159 (DGEE…EEEA). A compositionally biased stretch (basic and acidic residues) spans 160-180 (KENGKEKPAKAKAERKQREEQ). WD repeat units lie at residues 526–565 (GHTSLIRCISVEPKGEYIVTGSDDMTVKIWEISTARCIRT), 567–607 (PTGD…YMLV), 651–693 (THFR…SQVP), 696–734 (KSKGLIQCVLFHPIKPCLFVATQRHIRVYDLVKQLMMKK), 737–776 (PGCKWISSMAIHPKGDNLLIGTYEKRLMWFDLDLSTKPYQ), 780–819 (IHNAAIRSVAFHPRYPLFASAGDDRSVIVSHGMVYNDLLQ), and 835–865 (VNDFSVFDVVFHPTQPWVFSSGADNTVRLYT).

It belongs to the WD repeat BOP1/ERB1 family.

Its subcellular location is the nucleus. The protein localises to the nucleolus. The protein resides in the nucleoplasm. Its function is as follows. Required for maturation of ribosomal RNAs and formation of the large ribosomal subunit. In Anopheles gambiae (African malaria mosquito), this protein is Ribosome biogenesis protein BOP1 homolog.